We begin with the raw amino-acid sequence, 661 residues long: 7-beta-hydroxy-3-oxochol-24-oyl-CoA 4-desaturase (661 aa).

Gln-104 serves as a coordination point for FMN. Position 168–171 (168–171 (HCAH)) interacts with substrate. The active-site Proton donor is the Tyr-173. FMN-binding positions include Arg-222, Lys-298, and 320-321 (GR). Residues Cys-344, Cys-347, Cys-351, and Cys-363 each coordinate [4Fe-4S] cluster. Residues Gly-394, Glu-413, Gln-421, Lys-431, and Ala-458 each contribute to the FAD site.

The protein in the N-terminal section; belongs to the NADH:flavin oxidoreductase/NADH oxidase family. As to quaternary structure, homotrimer. FMN is required as a cofactor. FAD serves as cofactor. The cofactor is [4Fe-4S] cluster.

It catalyses the reaction 7beta-hydroxy-3-oxochol-24-oyl-CoA + NAD(+) = 7beta-hydroxy-3-oxochol-4-en-24-oyl-CoA + NADH + H(+). It functions in the pathway lipid metabolism; bile acid degradation. Activity is inhibited by sulfhydryl-reactive compounds, acriflavine, o-phenanthroline and EDTA. In terms of biological role, NADH-dependent flavin oxidoreductase. Stereo-specific NAD(H)-dependent 3-oxo-delta4-cholenoic acid oxidoreductase involved in bile acid 7beta-dehydroxylation. The chain is 7-beta-hydroxy-3-oxochol-24-oyl-CoA 4-desaturase from Clostridium scindens (strain JCM 10418 / VPI 12708).